Here is a 380-residue protein sequence, read N- to C-terminus: MNCIPSPISERKIQINNEDCIGKENAFHTIPRESSINLTPHSTNEKKVLSEVNSNKIDSLQLPRGKLQRDSTHLEKTRKRQLSNDSTDPIEPKTVKKIKCHQWKNLDSIEMDDPFMVAEYTDSIFSHLYEKEIQMLPTHNYLMDTQSPYHLKSSMRALLIDWLVEVHEKFHCLPETLFLAINLLDRFLSQNVVKLNKLQLLCITCLFIACKFEEVKLPKITNFAYVTDGAATVEGIRKAELFVLSSLGYNISLPNPLNFIRRISKADNYCIETRNMAKFIMEYSICCNKFIHLKPSYLAAMSMYIARKIKNENSKWDETFIHYSGGIDIESDPAFKDFISELVEDIAVPDTNLDSLRLKYKKPKHGMVYFKVFDWCKQKR.

Residues 63–91 are disordered; it reads PRGKLQRDSTHLEKTRKRQLSNDSTDPIE.

This sequence belongs to the cyclin family. Cyclin AB subfamily.

In terms of biological role, involved in G1/S and or S phase progression. Interacts with CDC28. The sequence is that of S-phase entry cyclin-6 (CLB6) from Saccharomyces cerevisiae (strain ATCC 204508 / S288c) (Baker's yeast).